The chain runs to 736 residues: Orphan sodium- and chloride-dependent neurotransmitter transporter NTT5 (736 aa).

The Cytoplasmic portion of the chain corresponds to 1 to 138 (MKTEAQPSTS…FAYLWLNSGG (138 aa)). 3 consecutive transmembrane segments (helical) span residues 139–159 (CSFAAIYIFMLFLVGVPLLFL), 177–197 (IIAPWIGGVGYSSFMVCFILG), and 199–219 (YFNVVNSWIIFYMSQSFQFPV). Residues 220–263 (PWEKCPLTMNSSGFDPECERTTPSIYFWYQQALKASDRIEDGGS) lie on the Extracellular side of the membrane. Asn229 is a glycosylation site (N-linked (GlcNAc...) asparagine). Helical transmembrane passes span 264-284 (PVYSLVLPFFLCWCLVGAFMI), 290-310 (TGKVIYVLVLLPCFIIVGFFI), 338-358 (VWSLAGGQVLSNTGIGLGSVA), and 383-403 (LTLLVFTSFNFCVLGFWATVI). Over 404–495 (THRCCERNAE…EAMSFLPPSV (92 aa)) the chain is Extracellular. Helical transmembrane passes span 496-516 (FWSFIFFLMLLAMGLSSAIGI), 534-554 (HTKLLIVGVFLLMFVCGLFFT), 568-588 (YWIVFPIIVVVVFETMAVSWA), 609-629 (IFGWLWPHLCPVVLLIIFVTM), and 659-679 (ALLLMITLFAIVILPIPAYFV). Residues 680 to 736 (YCRIHRIPFRPKSGDGPMTASTSLPLSHQLTPSKEVQKEEILQVDETKYPSTCNVTS) are Cytoplasmic-facing.

The protein belongs to the sodium:neurotransmitter symporter (SNF) (TC 2.A.22) family. SLC6A16 subfamily. Highly expressed in peripheral tissues, particularly in testis, pancreas, and prostate.

It is found in the membrane. The protein is Orphan sodium- and chloride-dependent neurotransmitter transporter NTT5 (SLC6A16) of Homo sapiens (Human).